Here is an 87-residue protein sequence, read N- to C-terminus: Large ribosomal subunit protein bL27c (87 aa).

Residues 1–20 (MAHKKGSGSTKNGRDSRSQR) form a disordered region.

This sequence belongs to the bacterial ribosomal protein bL27 family.

It localises to the plastid. The protein localises to the chloroplast. The chain is Large ribosomal subunit protein bL27c from Gracilaria tenuistipitata var. liui (Red alga).